A 650-amino-acid polypeptide reads, in one-letter code: 1-deoxy-D-xylulose-5-phosphate synthase (650 aa).

Thiamine diphosphate-binding positions include His73 and 113 to 115 (SHA). Asp145 is a Mg(2+) binding site. Thiamine diphosphate is bound by residues 146 to 147 (GA), Asn175, Tyr287, and Glu369. Asn175 is a Mg(2+) binding site.

The protein belongs to the transketolase family. DXPS subfamily. In terms of assembly, homodimer. Requires Mg(2+) as cofactor. It depends on thiamine diphosphate as a cofactor.

It catalyses the reaction D-glyceraldehyde 3-phosphate + pyruvate + H(+) = 1-deoxy-D-xylulose 5-phosphate + CO2. It participates in metabolic intermediate biosynthesis; 1-deoxy-D-xylulose 5-phosphate biosynthesis; 1-deoxy-D-xylulose 5-phosphate from D-glyceraldehyde 3-phosphate and pyruvate: step 1/1. Its function is as follows. Catalyzes the acyloin condensation reaction between C atoms 2 and 3 of pyruvate and glyceraldehyde 3-phosphate to yield 1-deoxy-D-xylulose-5-phosphate (DXP). In Leifsonia xyli subsp. xyli (strain CTCB07), this protein is 1-deoxy-D-xylulose-5-phosphate synthase.